Reading from the N-terminus, the 1001-residue chain is Sarcoplasmic/endoplasmic reticulum calcium ATPase 1 (1001 aa).

4 helical membrane-spanning segments follow: residues 49–69 (LWEL…LLAA), 90–110 (EPFV…WQER), 254–273 (DEFG…AVWL), and 296–313 (FKIA…GLPA). 4 residues coordinate Ca(2+): Val-304, Ala-305, Ile-307, and Glu-309. Catalysis depends on Asp-351, which acts as the 4-aspartylphosphate intermediate. Mg(2+) contacts are provided by Asp-351 and Thr-353. Thr-353 provides a ligand contact to ATP. At Thr-441 the chain carries Phosphothreonine. Positions 442, 489, 515, and 560 each coordinate ATP. Thr-569 carries the post-translational modification Phosphothreonine. Ser-581 carries the phosphoserine modification. Thr-625, Gly-626, Asp-627, Arg-678, and Lys-684 together coordinate ATP. Residue Asp-703 coordinates Mg(2+). Asn-706 contacts ATP. 3 helical membrane passes run 758–777 (KQFI…CIFL), 788–808 (IPVQ…TALG), and 829–851 (ISGW…TVGA). Asn-768, Glu-771, Asn-796, Thr-799, and Asp-800 together coordinate Ca(2+). An interaction with PLN region spans residues 788–808 (IPVQLLWVNLVTDGLPATALG). A disulfide bridge links Cys-876 with Cys-888. 3 consecutive transmembrane segments (helical) span residues 898–917 (TMAL…NSLS), 931–949 (IWLL…LILY), and 965–985 (TQWL…EILK). Position 908 (Glu-908) interacts with Ca(2+). Positions 932–943 (WLLGSICLSMSL) are interaction with PLN.

The protein belongs to the cation transport ATPase (P-type) (TC 3.A.3) family. Type IIA subfamily. Interacts with sarcolipin (SLN). Interacts with phospholamban (PLN). Interacts with myoregulin (MRLN). Interacts with DWORF. Interacts with VMP1. The cofactor is Mg(2+). As to expression, skeletal muscle, fast twitch muscle (type II) fibers.

Its subcellular location is the endoplasmic reticulum membrane. The protein resides in the sarcoplasmic reticulum membrane. The catalysed reaction is Ca(2+)(in) + ATP + H2O = Ca(2+)(out) + ADP + phosphate + H(+). Inhibited by sarcolipin (SLN) and myoregulin (MRLN). Has also been shown to be reversibly inhibited by phospholamban (PLN) at low calcium concentrations in vitro. Dephosphorylated PLN decreases the apparent affinity of the ATPase for calcium and this inhibition is regulated by the phosphorylation of PLN in vitro. Enhanced by DWORF; DWORF increases activity by displacing sarcolipin (SLN), phospholamban (PLN) and myoregulin (MRLN). Functionally, key regulator of striated muscle performance by acting as the major Ca(2+) ATPase responsible for the reuptake of cytosolic Ca(2+) into the sarcoplasmic reticulum. Catalyzes the hydrolysis of ATP coupled with the translocation of calcium from the cytosol to the sarcoplasmic reticulum lumen. Contributes to calcium sequestration involved in muscular excitation/contraction. The chain is Sarcoplasmic/endoplasmic reticulum calcium ATPase 1 from Homo sapiens (Human).